Reading from the N-terminus, the 647-residue chain is Threonine--tRNA ligase (647 aa).

A TGS domain is found at 1–63; the sequence is MYMIQLTFPD…EHDGKIELVM (63 aa). The tract at residues 247 to 544 is catalytic; the sequence is DHRKLGKELD…LIEEYKGAFP (298 aa). Residues Cys-340, His-391, and His-521 each contribute to the Zn(2+) site.

It belongs to the class-II aminoacyl-tRNA synthetase family. In terms of assembly, homodimer. It depends on Zn(2+) as a cofactor.

The protein resides in the cytoplasm. It catalyses the reaction tRNA(Thr) + L-threonine + ATP = L-threonyl-tRNA(Thr) + AMP + diphosphate + H(+). Catalyzes the attachment of threonine to tRNA(Thr) in a two-step reaction: L-threonine is first activated by ATP to form Thr-AMP and then transferred to the acceptor end of tRNA(Thr). Also edits incorrectly charged L-seryl-tRNA(Thr). The sequence is that of Threonine--tRNA ligase from Exiguobacterium sp. (strain ATCC BAA-1283 / AT1b).